Consider the following 479-residue polypeptide: Putative L-cysteine desulfhydrase 2 (479 aa).

The segment at 1–36 (MASLQSGGDAAANGVDADVDGAASPPSAKRPRAGAG) is disordered. A compositionally biased stretch (low complexity) spans 7–36 (GGDAAANGVDADVDGAASPPSAKRPRAGAG). Position 270 is an N6-(pyridoxal phosphate)lysine (lysine 270).

It belongs to the class-V pyridoxal-phosphate-dependent aminotransferase family. Pyridoxal 5'-phosphate serves as cofactor.

It catalyses the reaction L-cysteine + H2O = hydrogen sulfide + pyruvate + NH4(+) + H(+). In terms of biological role, catalyzes the production of hydrogen sulfide (H2S) from cysteine. The protein is Putative L-cysteine desulfhydrase 2 of Oryza sativa subsp. japonica (Rice).